Consider the following 119-residue polypeptide: Vitelline membrane protein Vm34Ca (119 aa).

A signal peptide spans 1–19 (MKCIAIVSTICLLAAFVAA). A VM domain is found at 69 to 106 (SIPAPPCPKNYLFSCQPNLAPVPCSAPAPSYGSAGAYS).

Belongs to the vitelline membrane protein family. As to expression, follicle cells.

The protein localises to the secreted. Functionally, major early eggshell protein. The protein is Vitelline membrane protein Vm34Ca (Vm34Ca) of Drosophila melanogaster (Fruit fly).